The following is a 76-amino-acid chain: Exodeoxyribonuclease 7 small subunit (76 aa).

This sequence belongs to the XseB family. In terms of assembly, heterooligomer composed of large and small subunits.

Its subcellular location is the cytoplasm. The catalysed reaction is Exonucleolytic cleavage in either 5'- to 3'- or 3'- to 5'-direction to yield nucleoside 5'-phosphates.. In terms of biological role, bidirectionally degrades single-stranded DNA into large acid-insoluble oligonucleotides, which are then degraded further into small acid-soluble oligonucleotides. The protein is Exodeoxyribonuclease 7 small subunit of Staphylococcus aureus (strain MRSA252).